Reading from the N-terminus, the 465-residue chain is A-type ATP synthase subunit B (465 aa).

This sequence belongs to the ATPase alpha/beta chains family. As to quaternary structure, has multiple subunits with at least A(3), B(3), C, D, E, F, H, I and proteolipid K(x).

It is found in the cell membrane. In terms of biological role, component of the A-type ATP synthase that produces ATP from ADP in the presence of a proton gradient across the membrane. The B chain is a regulatory subunit. This Sulfurisphaera tokodaii (strain DSM 16993 / JCM 10545 / NBRC 100140 / 7) (Sulfolobus tokodaii) protein is A-type ATP synthase subunit B.